A 526-amino-acid chain; its full sequence is Rho guanine nucleotide exchange factor 3 (526 aa).

The tract at residues 20 to 40 is disordered; that stretch reads ELPPASGPAKDAEEPSNKRVK. Phosphoserine is present on residues S47 and S70. Positions 122–304 constitute a DH domain; sequence KRQEAIFELS…QGIVAEINTK (183 aa). The PH domain occupies 291–449; it reads INIIQGIVAE…WLNCIRQAKE (159 aa). The segment at 464–526 is disordered; sequence EGSFLNPTTG…GNSRHGESNV (63 aa). Residues 466–475 are compositionally biased toward polar residues; the sequence is SFLNPTTGSR.

Interacts with RHOA and RHOB.

It localises to the cytoplasm. Its function is as follows. Acts as a guanine nucleotide exchange factor (GEF) for RhoA and RhoB GTPases. This chain is Rho guanine nucleotide exchange factor 3 (ARHGEF3), found in Pongo abelii (Sumatran orangutan).